Consider the following 201-residue polypeptide: Recombination protein RecR (201 aa).

The C4-type zinc-finger motif lies at C60 to C75. In terms of domain architecture, Toprim spans A83–P178.

This sequence belongs to the RecR family.

Its function is as follows. May play a role in DNA repair. It seems to be involved in an RecBC-independent recombinational process of DNA repair. It may act with RecF and RecO. The protein is Recombination protein RecR of Brucella melitensis biotype 2 (strain ATCC 23457).